The primary structure comprises 362 residues: Cyclic di-GMP phosphodiesterase PdeL (362 aa).

Positions 18–83 (HLSLPGSVSE…TFWRDIFFQY (66 aa)) constitute an HTH luxR-type domain. A DNA-binding region (H-T-H motif) is located at residues 42–61 (VTEISQYRNRSAKTISHQKK). An EAL domain is found at 106 to 360 (HIVTPEAISL…KFISEWVMKA (255 aa)). Glutamine 127 is a substrate binding site. Mg(2+) is bound at residue glutamate 141. Residues 144–145 (VR) and asparagine 200 each bind substrate. Residues asparagine 200, glutamate 232, and aspartate 262 each coordinate Mg(2+). Substrate-binding positions include aspartate 262, lysine 286, 319–322 (EGVE), and tyrosine 341.

In terms of assembly, is in a fast thermodynamic monomer-homodimer equilibrium. Dimerization is required for PDE activity. Dimerization affinity is increased about 100-fold upon substrate binding. Mg(2+) serves as cofactor. Requires Mn(2+) as cofactor.

It catalyses the reaction 3',3'-c-di-GMP + H2O = 5'-phosphoguanylyl(3'-&gt;5')guanosine + H(+). Its activity is regulated as follows. Strongly inhibited by Ca(2+). Acts both as an enzyme and as a c-di-GMP sensor to couple transcriptional activity to the c-di-GMP status of the cell. Phosphodiesterase (PDE) that catalyzes the hydrolysis of cyclic-di-GMP (c-di-GMP) to 5'-pGpG. Also acts as a transcription factor to control its own expression. The sequence is that of Cyclic di-GMP phosphodiesterase PdeL from Escherichia coli (strain K12).